The chain runs to 384 residues: MFEPVELSNNAVIKVVGVGGGGGNAVEHMVRERIEGVEFFAINTDAQALRKVEVGQTIQIGNNITKGLGAGANPEIGRTSAEEDKELLKSALDGSDMVFIAAGMGGGTGTGAAPVVAEIAKELGILTVAVVTKPFNFEGKKRMMVADQGVLELSKHVDSLITIPNDKLLKVLSRGISLLDAFGAANNVLKGAVQGIAELITRPGLMNVDFADVRTVMVEMGYAMMGTGISSGENRAEEAAEIAISSPLLEDIDLSGARGVLVNITAGFDLKLDEFETVGNTIRSFASDNATVVIGTSLDPDMNDTLRVTVVATGIGMEKYSDVNQTKNKSSKEILMDYRYQYLNISPTAIDKKNVKNEIKETDNKKRKEPEYLDIPAFLRKRSD.

GTP-binding positions include 20–24, 107–109, Glu-138, Arg-142, and Asn-186; these read GGGGN and GTG.

Belongs to the FtsZ family. As to quaternary structure, homodimer. Polymerizes to form a dynamic ring structure in a strictly GTP-dependent manner. Interacts directly with several other division proteins.

The protein localises to the cytoplasm. Its function is as follows. Essential cell division protein that forms a contractile ring structure (Z ring) at the future cell division site. The regulation of the ring assembly controls the timing and the location of cell division. One of the functions of the FtsZ ring is to recruit other cell division proteins to the septum to produce a new cell wall between the dividing cells. Binds GTP and shows GTPase activity. This chain is Cell division protein FtsZ, found in Buchnera aphidicola subsp. Schizaphis graminum (strain Sg).